A 151-amino-acid chain; its full sequence is MPLNQDFVGRSYTSDVPFQVGREHIRQFARAIGDGNPLFRDVEAAKAAGHADLVAPPTFLVTAIPGDLGLPTNDPALGLDYSLVVHGDQRFTLHRPVVAGDELVVRSTLASIRSVGRNEVLVTSYEFTTTSGELVAEGTCSLVSRGTAPPR.

A MaoC-like domain is found at 8 to 127 (VGRSYTSDVP…NEVLVTSYEF (120 aa)).

The protein belongs to the UPF0336 family.

This Parafrankia sp. (strain EAN1pec) protein is UPF0336 protein Franean1_6066.